A 305-amino-acid polypeptide reads, in one-letter code: Membrane glycoprotein UL142 (305 aa).

An N-terminal signal peptide occupies residues 1-19 (MRIEWACWLFGYFVSSVGS). Residues 20-270 (ERSLSYRYHL…QKTNNTTSPW (251 aa)) are Lumenal-facing. Residues 271 to 288 (VYAIPMGATATIGAGLYI) form a helical membrane-spanning segment. The Cytoplasmic segment spans residues 289 to 305 (GKHFTPVKFVYEVWRGQ).

Interacts with host MICA and ULBP3.

The protein localises to the host endoplasmic reticulum membrane. Its subcellular location is the host Golgi apparatus membrane. Functionally, participates in the inhibition of the host immune response. Prevents host NK cell-mediated lysis of the infected cell by preventing the KLRK1 ligand 3/ULBP3 trafficking to the cell surface. Also retains another KLRK1 ligand, MHC class I-related chain A/MICA, in the Golgi apparatus to avoid its surface expression. The sequence is that of Membrane glycoprotein UL142 (UL142) from Homo sapiens (Human).